The chain runs to 159 residues: 2-C-methyl-D-erythritol 2,4-cyclodiphosphate synthase (159 aa).

The a divalent metal cation site is built by Asp9 and His11. Residues 9-11 and 35-36 each bind 4-CDP-2-C-methyl-D-erythritol 2-phosphate; these read DVH and HS. His43 contacts a divalent metal cation. 4-CDP-2-C-methyl-D-erythritol 2-phosphate contacts are provided by residues 57–59, 62–66, 133–136, Phe140, and Arg143; these read DIG, FPDTD, and TTTE.

The protein belongs to the IspF family. Homotrimer. Requires a divalent metal cation as cofactor.

The enzyme catalyses 4-CDP-2-C-methyl-D-erythritol 2-phosphate = 2-C-methyl-D-erythritol 2,4-cyclic diphosphate + CMP. It participates in isoprenoid biosynthesis; isopentenyl diphosphate biosynthesis via DXP pathway; isopentenyl diphosphate from 1-deoxy-D-xylulose 5-phosphate: step 4/6. Involved in the biosynthesis of isopentenyl diphosphate (IPP) and dimethylallyl diphosphate (DMAPP), two major building blocks of isoprenoid compounds. Catalyzes the conversion of 4-diphosphocytidyl-2-C-methyl-D-erythritol 2-phosphate (CDP-ME2P) to 2-C-methyl-D-erythritol 2,4-cyclodiphosphate (ME-CPP) with a corresponding release of cytidine 5-monophosphate (CMP). The sequence is that of 2-C-methyl-D-erythritol 2,4-cyclodiphosphate synthase from Mannheimia succiniciproducens (strain KCTC 0769BP / MBEL55E).